Reading from the N-terminus, the 390-residue chain is Chorismate synthase (390 aa).

Positions 40 and 46 each coordinate NADP(+). Residues 129-131, 249-250, glycine 294, 309-313, and arginine 335 contribute to the FMN site; these read RAS, QA, and KPIPT.

It belongs to the chorismate synthase family. Homotetramer. Requires FMNH2 as cofactor.

It carries out the reaction 5-O-(1-carboxyvinyl)-3-phosphoshikimate = chorismate + phosphate. Its pathway is metabolic intermediate biosynthesis; chorismate biosynthesis; chorismate from D-erythrose 4-phosphate and phosphoenolpyruvate: step 7/7. Functionally, catalyzes the anti-1,4-elimination of the C-3 phosphate and the C-6 proR hydrogen from 5-enolpyruvylshikimate-3-phosphate (EPSP) to yield chorismate, which is the branch point compound that serves as the starting substrate for the three terminal pathways of aromatic amino acid biosynthesis. This reaction introduces a second double bond into the aromatic ring system. The chain is Chorismate synthase from Desulforudis audaxviator (strain MP104C).